The sequence spans 263 residues: MKISQLFLGLVACSTAFAYAGIDGISSNESNIKIGAAANASHPGGVAAVSVQAAGAPYNAFTGFSSLKGLAQAFAAQGTSNTNVTVGSKTFNISHIPVSAMPPSHSALGNFNFGQVGTQEVYFGEWWKAGDTPASASHTVYYAGDNTNTTVPTAGTATYTVAGINGSASNLLSGTFTANYGAGTLEGTLTGTGTAVSSLSLDGVAFNPGTAAFAGLATANGTAGVDNSGVVQGQFFGANASALAGIAQFDNVSYNTAFGGAKN.

The signal sequence occupies residues 1–20 (MKISQLFLGLVACSTAFAYA). Heme b contacts are provided by His-42, Tyr-58, Ser-104, and His-105.

As to quaternary structure, monomer in solution. Interacts with host hemoglobin.

It is found in the secreted. In terms of biological role, part of a high affinity heme acquisition system. Functions as a hemophore that acquires heme from human hemoglobin and delivers the heme to its cognate receptor, HphR, facilitating transport of heme across the bacterial outer membrane. Apo HphA interacts specifically with human hemoglobin and steals heme through a passive process probably due to its high affinity for heme. It can also acquire heme complexed to human serum albumin. Plays a supporting role for full virulence, acting as an accessory factor that enhances the process of heme uptake. This chain is Hemophilin, found in Acinetobacter baumannii.